Here is a 227-residue protein sequence, read N- to C-terminus: Protein GrpE (227 aa).

Over residues 1-18 the composition is skewed to polar residues; the sequence is MTQGNQKTEGNPPEQVTV. Disordered stretches follow at residues 1–57 and 193–227; these read MTQG…GAAT and TEEG…ASGD. Positions 19-35 are enriched in basic and acidic residues; the sequence is TDKRRIDPETGEVRHVP. Composition is skewed to low complexity over residues 41 to 50 and 199 to 213; these read GGTAPQAATA and EAAA…AAET.

The protein belongs to the GrpE family. As to quaternary structure, homodimer.

The protein localises to the cytoplasm. Functionally, participates actively in the response to hyperosmotic and heat shock by preventing the aggregation of stress-denatured proteins, in association with DnaK and GrpE. It is the nucleotide exchange factor for DnaK and may function as a thermosensor. Unfolded proteins bind initially to DnaJ; upon interaction with the DnaJ-bound protein, DnaK hydrolyzes its bound ATP, resulting in the formation of a stable complex. GrpE releases ADP from DnaK; ATP binding to DnaK triggers the release of the substrate protein, thus completing the reaction cycle. Several rounds of ATP-dependent interactions between DnaJ, DnaK and GrpE are required for fully efficient folding. The chain is Protein GrpE from Mycolicibacterium paratuberculosis (strain ATCC BAA-968 / K-10) (Mycobacterium paratuberculosis).